The primary structure comprises 77 residues: Small ribosomal subunit protein uS17 (77 aa).

It belongs to the universal ribosomal protein uS17 family. In terms of assembly, part of the 30S ribosomal subunit.

In terms of biological role, one of the primary rRNA binding proteins, it binds specifically to the 5'-end of 16S ribosomal RNA. This Rickettsia canadensis (strain McKiel) protein is Small ribosomal subunit protein uS17.